Consider the following 299-residue polypeptide: UTP--glucose-1-phosphate uridylyltransferase (299 aa).

The protein belongs to the UDPGP type 2 family.

The catalysed reaction is alpha-D-glucose 1-phosphate + UTP + H(+) = UDP-alpha-D-glucose + diphosphate. Its pathway is carbohydrate metabolism; nucleotide-sugar metabolism. It participates in capsule biogenesis; capsule polysaccharide biosynthesis. This is UTP--glucose-1-phosphate uridylyltransferase (cap4C) from Streptococcus pneumoniae serotype 4 (strain ATCC BAA-334 / TIGR4).